A 94-amino-acid chain; its full sequence is Large ribosomal subunit protein eL43A (94 aa).

Residues 39 to 62 (CPFCGRNTVKRTAAGIWCCNGKGC) form a C4-type zinc finger.

It belongs to the eukaryotic ribosomal protein eL43 family. In terms of assembly, component of the large ribosomal subunit (LSU). Mature yeast ribosomes consist of a small (40S) and a large (60S) subunit. The 40S small subunit contains 1 molecule of ribosomal RNA (18S rRNA) and at least 33 different proteins. The large 60S subunit contains 3 rRNA molecules (25S, 5.8S and 5S rRNA) and at least 46 different proteins.

Its subcellular location is the cytoplasm. Functionally, component of the ribosome, a large ribonucleoprotein complex responsible for the synthesis of proteins in the cell. The small ribosomal subunit (SSU) binds messenger RNAs (mRNAs) and translates the encoded message by selecting cognate aminoacyl-transfer RNA (tRNA) molecules. The large subunit (LSU) contains the ribosomal catalytic site termed the peptidyl transferase center (PTC), which catalyzes the formation of peptide bonds, thereby polymerizing the amino acids delivered by tRNAs into a polypeptide chain. The nascent polypeptides leave the ribosome through a tunnel in the LSU and interact with protein factors that function in enzymatic processing, targeting, and the membrane insertion of nascent chains at the exit of the ribosomal tunnel. In Schizosaccharomyces pombe (strain 972 / ATCC 24843) (Fission yeast), this protein is Large ribosomal subunit protein eL43A (rpl4301).